The sequence spans 391 residues: Adhesion defective protein 1 (391 aa).

Polar residues predominate over residues Ser-180–Gln-190. Disordered regions lie at residues Ser-180–Pro-217 and Val-366–Val-391. Low complexity predominate over residues Ser-201–Ser-211. Polar residues predominate over residues Asn-370–Leu-383.

This sequence belongs to the adn1/SEU family.

It is found in the nucleus. Probable transcriptional regulator involved in cell adhesion. In Schizosaccharomyces pombe (strain 972 / ATCC 24843) (Fission yeast), this protein is Adhesion defective protein 1 (adn1).